We begin with the raw amino-acid sequence, 325 residues long: Beta-ketoacyl-[acyl-carrier-protein] synthase III (325 aa).

Active-site residues include Cys-119 and His-252. Residues 253–257 (QANIR) are ACP-binding. Asn-282 is an active-site residue.

The protein belongs to the thiolase-like superfamily. FabH family. As to quaternary structure, homodimer.

It is found in the cytoplasm. The enzyme catalyses malonyl-[ACP] + acetyl-CoA + H(+) = 3-oxobutanoyl-[ACP] + CO2 + CoA. Its pathway is lipid metabolism; fatty acid biosynthesis. Catalyzes the condensation reaction of fatty acid synthesis by the addition to an acyl acceptor of two carbons from malonyl-ACP. Catalyzes the first condensation reaction which initiates fatty acid synthesis and may therefore play a role in governing the total rate of fatty acid production. Possesses both acetoacetyl-ACP synthase and acetyl transacylase activities. Its substrate specificity determines the biosynthesis of branched-chain and/or straight-chain of fatty acids. The polypeptide is Beta-ketoacyl-[acyl-carrier-protein] synthase III (Verminephrobacter eiseniae (strain EF01-2)).